A 681-amino-acid polypeptide reads, in one-letter code: UvrABC system protein B (681 aa).

The 390-residue stretch at glutamine 30–proline 419 folds into the Helicase ATP-binding domain. Glycine 43–threonine 50 is a binding site for ATP. Positions tyrosine 96–isoleucine 119 match the Beta-hairpin motif. The 167-residue stretch at glutamine 435–leucine 601 folds into the Helicase C-terminal domain. Residues tyrosine 641–valine 676 enclose the UVR domain.

The protein belongs to the UvrB family. As to quaternary structure, forms a heterotetramer with UvrA during the search for lesions. Interacts with UvrC in an incision complex.

The protein localises to the cytoplasm. Functionally, the UvrABC repair system catalyzes the recognition and processing of DNA lesions. A damage recognition complex composed of 2 UvrA and 2 UvrB subunits scans DNA for abnormalities. Upon binding of the UvrA(2)B(2) complex to a putative damaged site, the DNA wraps around one UvrB monomer. DNA wrap is dependent on ATP binding by UvrB and probably causes local melting of the DNA helix, facilitating insertion of UvrB beta-hairpin between the DNA strands. Then UvrB probes one DNA strand for the presence of a lesion. If a lesion is found the UvrA subunits dissociate and the UvrB-DNA preincision complex is formed. This complex is subsequently bound by UvrC and the second UvrB is released. If no lesion is found, the DNA wraps around the other UvrB subunit that will check the other stand for damage. This is UvrABC system protein B from Chlorobium chlorochromatii (strain CaD3).